We begin with the raw amino-acid sequence, 341 residues long: UPF0284 protein Ta0078 (341 aa).

It belongs to the UPF0284 family.

The protein is UPF0284 protein Ta0078 of Thermoplasma acidophilum (strain ATCC 25905 / DSM 1728 / JCM 9062 / NBRC 15155 / AMRC-C165).